We begin with the raw amino-acid sequence, 256 residues long: Thiazole synthase (256 aa).

Catalysis depends on K96, which acts as the Schiff-base intermediate with DXP. Residues G157, 183 to 184, and 205 to 206 contribute to the 1-deoxy-D-xylulose 5-phosphate site; these read AG and NT.

The protein belongs to the ThiG family. As to quaternary structure, homotetramer. Forms heterodimers with either ThiH or ThiS.

The protein resides in the cytoplasm. The catalysed reaction is [ThiS sulfur-carrier protein]-C-terminal-Gly-aminoethanethioate + 2-iminoacetate + 1-deoxy-D-xylulose 5-phosphate = [ThiS sulfur-carrier protein]-C-terminal Gly-Gly + 2-[(2R,5Z)-2-carboxy-4-methylthiazol-5(2H)-ylidene]ethyl phosphate + 2 H2O + H(+). It functions in the pathway cofactor biosynthesis; thiamine diphosphate biosynthesis. Its function is as follows. Catalyzes the rearrangement of 1-deoxy-D-xylulose 5-phosphate (DXP) to produce the thiazole phosphate moiety of thiamine. Sulfur is provided by the thiocarboxylate moiety of the carrier protein ThiS. In vitro, sulfur can be provided by H(2)S. This is Thiazole synthase from Clostridioides difficile (strain 630) (Peptoclostridium difficile).